The chain runs to 1960 residues: Myosin-9 (1960 aa).

Residue Ala-2 is modified to N-acetylalanine. Positions Ala-2–Leu-838 are mediates interaction with LIMCH1. Residue Lys-8 is modified to N6-acetyllysine. A Phosphotyrosine modification is found at Tyr-11. The Myosin N-terminal SH3-like domain maps to Ala-27–Pro-77. The Myosin motor domain maps to Ser-81 to Asp-776. Lys-102 carries the post-translational modification N6-acetyllysine. Gly-174 to Thr-181 serves as a coordination point for ATP. N6-acetyllysine is present on residues Lys-299, Lys-435, and Lys-613. A Phosphoserine modification is found at Ser-628. The actin-binding stretch occupies residues Leu-654–His-676. Tyr-754 carries the phosphotyrosine modification. Residues Ile-779–Ala-808 enclose the IQ domain. Residues Leu-837 to Leu-1926 adopt a coiled-coil conformation. Lys-850 carries the post-translational modification N6-succinyllysine. 3 positions are modified to N6-acetyllysine: Lys-860, Lys-975, and Lys-1024. Basic and acidic residues predominate over residues Arg-1035–Gly-1055. The tract at residues Arg-1035–Ser-1057 is disordered. Ser-1114 is modified (phosphoserine). The disordered stretch occupies residues Glu-1118–Leu-1137. Residues Ser-1122–Leu-1137 show a composition bias toward basic and acidic residues. N6-acetyllysine occurs at positions 1234, 1249, 1357, 1392, 1404, 1410, 1459, and 1638. Position 1669 is an N6-succinyllysine (Lys-1669). At Ser-1714 the chain carries Phosphoserine. An N6-acetyllysine mark is found at Lys-1793, Lys-1802, and Lys-1845. The disordered stretch occupies residues Arg-1877 to Glu-1960. Arg-1923 carries the omega-N-methylarginine modification. Position 1943 is a phosphoserine (Ser-1943). Basic and acidic residues predominate over residues Asp-1948–Glu-1960.

This sequence belongs to the TRAFAC class myosin-kinesin ATPase superfamily. Myosin family. As to quaternary structure, myosin is a hexameric protein that consists of 2 heavy chain subunits (MHC), 2 alkali light chain subunits (MLC) and 2 regulatory light chain subunits (MLC-2). Interacts with RASIP1. Interacts with DDR1. Interacts with PDLIM2. Interacts with SVIL. Interacts with HTRA3. Interacts with Myo7a. Interacts with CFAP95. Interacts with LIMCH1; independently of the integration of MYH9 into the myosin complex. Interacts with RAB3A. Interacts with ZBED4. Interacts with S100A4; this interaction increases cell motility. In terms of assembly, (Microbial infection) Interacts with herpes simplex virus 1/HHV-1 envelope glycoprotein B. ISGylated. In terms of processing, ubiquitination. In the kidney, expressed in the glomeruli. Also expressed in leukocytes.

The protein localises to the cytoplasm. Its subcellular location is the cytoskeleton. It localises to the cell cortex. The protein resides in the cytoplasmic vesicle. It is found in the secretory vesicle. The protein localises to the cortical granule. Its subcellular location is the cell membrane. Cellular myosin that appears to play a role in cytokinesis, cell shape, and specialized functions such as secretion and capping. Required for cortical actin clearance prior to oocyte exocytosis. Promotes cell motility in conjunction with S100A4. During cell spreading, plays an important role in cytoskeleton reorganization, focal contact formation (in the margins but not the central part of spreading cells), and lamellipodial retraction; this function is mechanically antagonized by MYH10. Functionally, (Microbial infection) Acts as a receptor for herpes simplex virus 1/HHV-1 envelope glycoprotein B. This chain is Myosin-9 (MYH9), found in Homo sapiens (Human).